Here is a 150-residue protein sequence, read N- to C-terminus: 16.6 kDa heat shock protein (150 aa).

Positions alanine 31–glycine 150 constitute a sHSP domain.

Belongs to the small heat shock protein (HSP20) family. In terms of assembly, may form oligomeric structures.

Its subcellular location is the cytoplasm. The protein is 16.6 kDa heat shock protein (HSP16.6) of Oryza sativa subsp. japonica (Rice).